A 457-amino-acid chain; its full sequence is tRNA modification GTPase MnmE (457 aa).

Positions 24, 81, and 121 each coordinate (6S)-5-formyl-5,6,7,8-tetrahydrofolate. The TrmE-type G domain maps to 218–380 (GIKIVITGKP…LLKYLTKIIS (163 aa)). Asn-228 provides a ligand contact to K(+). GTP contacts are provided by residues 228–233 (NVGKSS), 247–253 (TNIAGTT), 272–275 (DTAG), and 338–341 (NKAD). A Mg(2+)-binding site is contributed by Ser-232. Residues Thr-247, Ile-249, and Thr-252 each contribute to the K(+) site. A Mg(2+)-binding site is contributed by Thr-253. Lys-457 contributes to the (6S)-5-formyl-5,6,7,8-tetrahydrofolate binding site.

The protein belongs to the TRAFAC class TrmE-Era-EngA-EngB-Septin-like GTPase superfamily. TrmE GTPase family. In terms of assembly, homodimer. Heterotetramer of two MnmE and two MnmG subunits. It depends on K(+) as a cofactor.

Its subcellular location is the cytoplasm. In terms of biological role, exhibits a very high intrinsic GTPase hydrolysis rate. Involved in the addition of a carboxymethylaminomethyl (cmnm) group at the wobble position (U34) of certain tRNAs, forming tRNA-cmnm(5)s(2)U34. The sequence is that of tRNA modification GTPase MnmE from Baumannia cicadellinicola subsp. Homalodisca coagulata.